Consider the following 410-residue polypeptide: Dihydrolipoyllysine-residue acetyltransferase component of pyruvate dehydrogenase complex (410 aa).

Residues 1 to 69 (MPDIGTDLVE…TTGSLIAILN (69 aa)) form the Lipoyl-binding domain. N6-lipoyllysine is present on Lys35. The tract at residues 81 to 100 (SSSYSFKNSKNTSTNSNLGN) is disordered. Positions 113–150 (HATPTVRRLARKFDIKLENITGTGRKGRILKEDVISYK) constitute a Peripheral subunit-binding (PSBD) domain. His383 is a catalytic residue.

This sequence belongs to the 2-oxoacid dehydrogenase family. Forms a 24-polypeptide structural core with octahedral symmetry. Requires (R)-lipoate as cofactor.

It catalyses the reaction N(6)-[(R)-dihydrolipoyl]-L-lysyl-[protein] + acetyl-CoA = N(6)-[(R)-S(8)-acetyldihydrolipoyl]-L-lysyl-[protein] + CoA. Its function is as follows. The pyruvate dehydrogenase complex catalyzes the overall conversion of pyruvate to acetyl-CoA and CO(2). It contains multiple copies of three enzymatic components: pyruvate dehydrogenase (E1), dihydrolipoamide acetyltransferase (E2) and lipoamide dehydrogenase (E3). The chain is Dihydrolipoyllysine-residue acetyltransferase component of pyruvate dehydrogenase complex (aceF) from Buchnera aphidicola subsp. Baizongia pistaciae (strain Bp).